The chain runs to 208 residues: MGVADAPSPGNVPVLGDMKNRSAAEMKISVLALRALTLVLLVIALALMVSNKQTQSIPIKLPGMASTIFLKKTATFSQITGVQYYVGALSVAVAYMFFQMLAGLFTILTTGSIVGSKSRAWVTFILDQLIAYLMVSAATVVAEVGYIARRGETKVGWNQVCSDFKHYCFIYGFSLVNAFLATIAFLPVVAVSAFHLFRMYGAQSAQSK.

At Met-1–Lys-27 the chain is on the cytoplasmic side. Residues Ile-28–Met-48 traverse the membrane as a helical segment. Residues Val-49–Gly-87 lie on the Extracellular side of the membrane. The chain crosses the membrane as a helical span at residues Ala-88–Leu-108. Residues Thr-109–Ala-120 are Cytoplasmic-facing. Residues Trp-121–Val-141 form a helical membrane-spanning segment. Residues Ala-142 to Cys-168 lie on the Extracellular side of the membrane. Residues Phe-169–Val-189 traverse the membrane as a helical segment. Topologically, residues Ala-190–Lys-208 are cytoplasmic.

Belongs to the Casparian strip membrane proteins (CASP) family. In terms of assembly, homodimer and heterodimers.

It localises to the cell membrane. This Selaginella moellendorffii (Spikemoss) protein is CASP-like protein 2U9.